Here is a 323-residue protein sequence, read N- to C-terminus: Beta-ketoacyl-[acyl-carrier-protein] synthase III (323 aa).

Catalysis depends on residues C113 and H250. Positions 251–255 (QANKR) are ACP-binding. Residue N280 is part of the active site.

This sequence belongs to the thiolase-like superfamily. FabH family. Homodimer.

The protein resides in the cytoplasm. The catalysed reaction is malonyl-[ACP] + acetyl-CoA + H(+) = 3-oxobutanoyl-[ACP] + CO2 + CoA. It functions in the pathway lipid metabolism; fatty acid biosynthesis. Catalyzes the condensation reaction of fatty acid synthesis by the addition to an acyl acceptor of two carbons from malonyl-ACP. Catalyzes the first condensation reaction which initiates fatty acid synthesis and may therefore play a role in governing the total rate of fatty acid production. Possesses both acetoacetyl-ACP synthase and acetyl transacylase activities. Its substrate specificity determines the biosynthesis of branched-chain and/or straight-chain of fatty acids. This Mesorhizobium japonicum (strain LMG 29417 / CECT 9101 / MAFF 303099) (Mesorhizobium loti (strain MAFF 303099)) protein is Beta-ketoacyl-[acyl-carrier-protein] synthase III.